The primary structure comprises 48 residues: Thiamine thiazole synthase, chloroplastic (48 aa).

2 residues coordinate substrate: Ala18 and Val40.

The protein belongs to the THI4 family. In terms of assembly, homooctamer. Requires Fe cation as cofactor.

The protein localises to the plastid. It localises to the chloroplast. The enzyme catalyses [ADP-thiazole synthase]-L-cysteine + glycine + NAD(+) = [ADP-thiazole synthase]-dehydroalanine + ADP-5-ethyl-4-methylthiazole-2-carboxylate + nicotinamide + 3 H2O + 2 H(+). Functionally, involved in biosynthesis of the thiamine precursor thiazole. Catalyzes the conversion of NAD and glycine to adenosine diphosphate 5-(2-hydroxyethyl)-4-methylthiazole-2-carboxylic acid (ADT), an adenylated thiazole intermediate. The reaction includes an iron-dependent sulfide transfer from a conserved cysteine residue of the protein to a thiazole intermediate. The enzyme can only undergo a single turnover, which suggests it is a suicide enzyme. May have additional roles in adaptation to various stress conditions and in DNA damage tolerance. In Populus euphratica (Euphrates poplar), this protein is Thiamine thiazole synthase, chloroplastic (THI1).